The primary structure comprises 201 residues: CASP-like protein 1E1 (201 aa).

The Cytoplasmic segment spans residues 1 to 36 (MESQFRPGFDVSQGAGGRASKFGDVVAPTSSTQLPG). The chain crosses the membrane as a helical span at residues 37 to 57 (IILRIVAIVLTFISAVVMGAA). Residues 58-87 (RQTTTVTGIDAETALLTSITVTVKSTYSAA) lie on the Extracellular side of the membrane. The helical transmembrane segment at 88–108 (YVYFVVANVLVFFYSVVSLVL) threads the bilayer. Over 109-127 (SMVNKARLTSMSLPFSIAD) the chain is Cytoplasmic. Residues 128-148 (LLMVVLLFSSNGAAAAISVVA) traverse the membrane as a helical segment. At 149–173 (EKGQQNLAGWDKICNLFGGLCARVN) the chain is on the extracellular side. A helical membrane pass occupies residues 174–194 (AAIVLSMLASVAYVILVVFGM). Over 195–201 (ANLRRSQ) the chain is Cytoplasmic.

It belongs to the Casparian strip membrane proteins (CASP) family. As to quaternary structure, homodimer and heterodimers.

The protein resides in the cell membrane. The chain is CASP-like protein 1E1 from Musa acuminata (Banana).